Reading from the N-terminus, the 535-residue chain is Nuclear/nucleolar GTPase 2 (535 aa).

The interval Met1–Ser42 is disordered. Basic and acidic residues predominate over residues His17 to Gly29. Over residues Ala30 to Arg41 the composition is skewed to gly residues. Residues Trp213–Gln374 form the CP-type G domain. Positions Asn261–Asp264 are G4. A G5 region spans residues Ser290–Asn292. The G1 stretch occupies residues Gly323 to Ser330. The tract at residues Gly349–Val353 is G2. The G3 stretch occupies residues Asp367–Gly370. The disordered stretch occupies residues Phe464–Asp494.

This sequence belongs to the TRAFAC class YlqF/YawG GTPase family. RsgA subfamily. As to quaternary structure, interacts (via N-terminus) with the 60S ribosomal proteins RPL10A. This interaction is enhanced by the addition of GTP. As to expression, expressed in roots, shoot apical meristem, leaves, leaf sheaths and flowers.

It is found in the nucleus. Its subcellular location is the nucleolus. The GTPase activity is stimulated in the presence of ribosomes, particularly of the 60S subunit. Its function is as follows. GTPase involved in pre-60S ribosomal subunit maturation. This chain is Nuclear/nucleolar GTPase 2, found in Oryza sativa subsp. japonica (Rice).